The following is a 430-amino-acid chain: Inner membrane transport protein YbaT (430 aa).

Residues 1–14 (MMNTEGNNGNKPLG) lie on the Cytoplasmic side of the membrane. The helical transmembrane segment at 15-35 (LWNVVSIGIGAMVGAGIFALL) threads the bilayer. Residues 36 to 38 (GQA) lie on the Periplasmic side of the membrane. A helical transmembrane segment spans residues 39–59 (ALLMEASTWVAFAFGGIVAMF). Residues 60 to 88 (SGYAYARLGASYPSNGGIIDFFRRGLGNG) are Cytoplasmic-facing. A helical transmembrane segment spans residues 89 to 109 (VFSLALSLLYLLTLAVSIAMV). Residues 110 to 128 (ARAFGAYAVQFLHEGSQEE) lie on the Periplasmic side of the membrane. A helical membrane pass occupies residues 129–149 (HLILLYALGIIAVMTLFNSLS). Residues 150 to 157 (NHAVGRLE) are Cytoplasmic-facing. Residues 158-178 (VILVGIKMMILLLLIIAGVWS) form a helical membrane-spanning segment. The Periplasmic segment spans residues 179–192 (LQPAHISVSAPPSS). A helical membrane pass occupies residues 193–213 (GAFFSCIGITFLAYAGFGMMA). The Cytoplasmic portion of the chain corresponds to 214–228 (NAADKVKDPQVIMPR). A helical transmembrane segment spans residues 229–249 (AFLVAIGVTTLLYISLALVLL). The Periplasmic portion of the chain corresponds to 250–272 (SDVSALELEKYADTAVAQAASPL). Residues 273–293 (LGHVGYVIVVIGALLATASAI) form a helical membrane-spanning segment. The Cytoplasmic portion of the chain corresponds to 294–325 (NANLFAVFNIMDNMGSERELPKLMNKSLWRQS). Residues 326-346 (TWGNIIVVVLIMLMTAALNLG) traverse the membrane as a helical segment. Ser-347 is a topological domain (periplasmic). Residues 348 to 368 (LASVASATFLICYLAVFVVAI) traverse the membrane as a helical segment. Residues 369-379 (RLRHDIHASLP) lie on the Cytoplasmic side of the membrane. Residues 380–400 (ILIVGTLVMLLVIVGFIYSLW) form a helical membrane-spanning segment. The Periplasmic portion of the chain corresponds to 401–403 (SQG). The chain crosses the membrane as a helical span at residues 404–424 (SRALIWIIGSLLLSLIVAMVM). Residues 425–430 (KRNKTV) are Cytoplasmic-facing.

Belongs to the amino acid-polyamine-organocation (APC) superfamily.

It is found in the cell inner membrane. Probable amino-acid or metabolite transport protein. The protein is Inner membrane transport protein YbaT (ybaT) of Escherichia coli (strain K12).